Consider the following 372-residue polypeptide: Cuticle collagen dpy-10 (372 aa).

A signal peptide spans 1–45 (MKNNAKEDYRTFSLTTNYSRQMIYRCVTGLQIGFSLFSFIIVCVA). Triple-helical region regions lie at residues 144-173 (GPPGPRGSSGTPGKPGLPGNAGKPGMPGTT), 195-251 (GPPG…KGPT), and 259-324 (GPPG…PGVC). The interval 144–372 (GPPGPRGSSG…RAGYQGYGRK (229 aa)) is disordered. Residues 185–196 (EPPPCRPCPKGP) show a composition bias toward pro residues. Residues 197 to 208 (PGIKGWPGFPGD) are compositionally biased toward low complexity. Gly residues-rich tracts occupy residues 237 to 246 (GYRGGPGAPG) and 283 to 292 (GLTGGQGERG). Low complexity predominate over residues 293 to 303 (WPGVSGESGEP). A compositionally biased stretch (gly residues) spans 353–363 (GYGGSRGGGDR).

This sequence belongs to the cuticular collagen family. As to quaternary structure, collagen polypeptide chains are complexed within the cuticle by disulfide bonds and other types of covalent cross-links.

Functionally, nematode cuticles are composed largely of collagen-like proteins. The cuticle functions both as an exoskeleton and as a barrier to protect the worm from its environment. The chain is Cuticle collagen dpy-10 (dpy-10) from Caenorhabditis elegans.